The sequence spans 275 residues: Large ribosomal subunit protein uL2 (275 aa).

Disordered stretches follow at residues 38–59 and 222–275; these read KKHA…GGHK and GSAM…RKQK. Composition is skewed to basic residues over residues 39-59 and 254-275; these read KHAG…GGHK and MGKK…RKQK.

It belongs to the universal ribosomal protein uL2 family. As to quaternary structure, part of the 50S ribosomal subunit. Forms a bridge to the 30S subunit in the 70S ribosome.

Functionally, one of the primary rRNA binding proteins. Required for association of the 30S and 50S subunits to form the 70S ribosome, for tRNA binding and peptide bond formation. It has been suggested to have peptidyltransferase activity; this is somewhat controversial. Makes several contacts with the 16S rRNA in the 70S ribosome. The chain is Large ribosomal subunit protein uL2 from Herpetosiphon aurantiacus (strain ATCC 23779 / DSM 785 / 114-95).